Here is a 203-residue protein sequence, read N- to C-terminus: uncharacterized protein (203 aa).

This is an uncharacterized protein from Aquifex aeolicus (strain VF5).